The sequence spans 84 residues: Anaphase-promoting complex subunit 11 (84 aa).

12 residues coordinate Zn(2+): cysteine 23, cysteine 26, cysteine 34, cysteine 37, cysteine 44, cysteine 51, histidine 53, histidine 56, histidine 58, cysteine 59, cysteine 73, and cysteine 76. The segment at 34-77 (CPDCKVPGDDCPLVWGQCSHCFHMHCILKWLNAQQVQQHCPMCR) adopts an RING-type zinc-finger fold.

This sequence belongs to the RING-box family. The mammalian APC/C is composed at least of 14 distinct subunits ANAPC1, ANAPC2, CDC27/APC3, ANAPC4, ANAPC5, CDC16/APC6, ANAPC7, CDC23/APC8, ANAPC10, ANAPC11, CDC26/APC12, ANAPC13, ANAPC15 and ANAPC16 that assemble into a complex of at least 19 chains with a combined molecular mass of around 1.2 MDa; APC/C interacts with FZR1 and FBXO5. Interacts with the cullin domain of ANAPC2. Interacts with UBE2D2. Auto-ubiquitinated.

It localises to the cytoplasm. It is found in the nucleus. The protein operates within protein modification; protein ubiquitination. Its function is as follows. Together with the cullin protein ANAPC2, constitutes the catalytic component of the anaphase promoting complex/cyclosome (APC/C), a cell cycle-regulated E3 ubiquitin ligase that controls progression through mitosis and the G1 phase of the cell cycle. The APC/C complex acts by mediating ubiquitination and subsequent degradation of target proteins: it mainly mediates the formation of 'Lys-11'-linked polyubiquitin chains and, to a lower extent, the formation of 'Lys-48'- and 'Lys-63'-linked polyubiquitin chains. The APC/C complex catalyzes assembly of branched 'Lys-11'-/'Lys-48'-linked branched ubiquitin chains on target proteins. May recruit the E2 ubiquitin-conjugating enzymes to the complex. The chain is Anaphase-promoting complex subunit 11 (Anapc11) from Mus musculus (Mouse).